We begin with the raw amino-acid sequence, 440 residues long: tRNA-2-methylthio-N(6)-dimethylallyladenosine synthase (440 aa).

An MTTase N-terminal domain is found at 2–117; the sequence is KGLYIKTYGC…LPELIVKASR (116 aa). Residues cysteine 11, cysteine 47, cysteine 80, cysteine 157, cysteine 161, and cysteine 164 each coordinate [4Fe-4S] cluster. A Radical SAM core domain is found at 143-374; that stretch reads NSQGSSAFLA…QELISKQQLE (232 aa). The region spanning 377–440 is the TRAM domain; it reads QSMIGKTIPV…RQNSLLGCAA (64 aa).

It belongs to the methylthiotransferase family. MiaB subfamily. As to quaternary structure, monomer. [4Fe-4S] cluster is required as a cofactor.

Its subcellular location is the cytoplasm. It catalyses the reaction N(6)-dimethylallyladenosine(37) in tRNA + (sulfur carrier)-SH + AH2 + 2 S-adenosyl-L-methionine = 2-methylsulfanyl-N(6)-dimethylallyladenosine(37) in tRNA + (sulfur carrier)-H + 5'-deoxyadenosine + L-methionine + A + S-adenosyl-L-homocysteine + 2 H(+). In terms of biological role, catalyzes the methylthiolation of N6-(dimethylallyl)adenosine (i(6)A), leading to the formation of 2-methylthio-N6-(dimethylallyl)adenosine (ms(2)i(6)A) at position 37 in tRNAs that read codons beginning with uridine. The sequence is that of tRNA-2-methylthio-N(6)-dimethylallyladenosine synthase from Wolbachia pipientis subsp. Culex pipiens (strain wPip).